A 213-amino-acid chain; its full sequence is Orotate phosphoribosyltransferase (213 aa).

Lys26 serves as a coordination point for 5-phospho-alpha-D-ribose 1-diphosphate. 34 to 35 (FF) contacts orotate. Residues 72–73 (YK), Arg99, Lys100, Lys103, His105, and 124–132 (DDVITAGTA) each bind 5-phospho-alpha-D-ribose 1-diphosphate. Positions 128 and 156 each coordinate orotate.

This sequence belongs to the purine/pyrimidine phosphoribosyltransferase family. PyrE subfamily. As to quaternary structure, homodimer. The cofactor is Mg(2+).

The catalysed reaction is orotidine 5'-phosphate + diphosphate = orotate + 5-phospho-alpha-D-ribose 1-diphosphate. It functions in the pathway pyrimidine metabolism; UMP biosynthesis via de novo pathway; UMP from orotate: step 1/2. Functionally, catalyzes the transfer of a ribosyl phosphate group from 5-phosphoribose 1-diphosphate to orotate, leading to the formation of orotidine monophosphate (OMP). The chain is Orotate phosphoribosyltransferase from Erwinia tasmaniensis (strain DSM 17950 / CFBP 7177 / CIP 109463 / NCPPB 4357 / Et1/99).